The primary structure comprises 81 residues: Acyl carrier protein (81 aa).

The Carrier domain maps to 5 to 80; it reads EEIFSKVKSI…DIVSYIEKKL (76 aa). Residue Ser40 is modified to O-(pantetheine 4'-phosphoryl)serine.

Belongs to the acyl carrier protein (ACP) family. Post-translationally, 4'-phosphopantetheine is transferred from CoA to a specific serine of apo-ACP by AcpS. This modification is essential for activity because fatty acids are bound in thioester linkage to the sulfhydryl of the prosthetic group.

Its subcellular location is the cytoplasm. It functions in the pathway lipid metabolism; fatty acid biosynthesis. In terms of biological role, carrier of the growing fatty acid chain in fatty acid biosynthesis. The chain is Acyl carrier protein from Thermotoga maritima (strain ATCC 43589 / DSM 3109 / JCM 10099 / NBRC 100826 / MSB8).